A 438-amino-acid polypeptide reads, in one-letter code: MNLKVKTISNIGGEVKAPPSKSYSHRAVILASLADGTSKIHDMLFSQDVLSSINVCRALGANITKKDDYLEVIGTNGKLHNSSEVPIDLGNSGTTLRLMTSIASLADNEVILTGDDSLQTRPMEILTESLASLGVCAASINGNGKAPILIKPGYVGGETNILGNVSSQFISSILISAPLSENGVDLFVLPEFKSRPYVNMTCDIMAKFGVKIENEFFVRHDDCDRESKNCRIDEFKISKQEYKSCDYVVEGDYSSASYLLAAVAIYGGNAKILNLFKDSKQGDKLILNILKKMGAKIEIFDDYVEISSEGNLKGIDVDLSNAPDLLITVAILAALADGTTNITGVKHARVKETDRIATTCSELKKLGCKLKEFEDGMSIEGGIRSGVVDSHKDHRLAMAFSLVGLKHDIEIKNGEVFDVSFPNFIEAMSEIGVELELI.

3-phosphoshikimate-binding residues include Lys21, Ser22, and Arg26. Lys21 is a binding site for phosphoenolpyruvate. Phosphoenolpyruvate contacts are provided by Gly93 and Arg121. Positions 166, 167, 168, 194, 324, and 351 each coordinate 3-phosphoshikimate. Position 168 (Gln168) interacts with phosphoenolpyruvate. The Proton acceptor role is filled by Asp324. Positions 355 and 395 each coordinate phosphoenolpyruvate.

Belongs to the EPSP synthase family. In terms of assembly, monomer.

The protein resides in the cytoplasm. The catalysed reaction is 3-phosphoshikimate + phosphoenolpyruvate = 5-O-(1-carboxyvinyl)-3-phosphoshikimate + phosphate. It functions in the pathway metabolic intermediate biosynthesis; chorismate biosynthesis. In terms of biological role, catalyzes the transfer of the enolpyruvyl moiety of phosphoenolpyruvate (PEP) to the 5-hydroxyl of shikimate-3-phosphate (S3P) to produce enolpyruvyl shikimate-3-phosphate and inorganic phosphate. The sequence is that of 3-phosphoshikimate 1-carboxyvinyltransferase from Methanobrevibacter smithii (strain ATCC 35061 / DSM 861 / OCM 144 / PS).